A 381-amino-acid chain; its full sequence is MKAGATSMWASCCGLLNEVMGTGAVRGQQAGFPGSTGPFRFTPSSDFPTYPPAATEGPNIVCKACGLSFSVFRKKHVCCDCKKDFCSLCSVSQENLRRCSTCHLLQETAFQRPQLMRLKVKDLRQYLLLRNVPTDTCREKEDLVDLVLCHRGLGSGDGLDSRSLSSSRSQTSSFFTQSYFSNYTPPSATVSSFQGELMDREGTFRSEVLTQVQSELASANTDDEDGEEDDDDDDDDDDEDDDEQEENLEEQNPGLSKKKARASLSDLSSLEEVEGMSVRQLKEILARNFVNYSGCCEKWELVEKVNRLYKENEENQKSYGERMQLQDEEDDSLCRICMDAVIDCVLLECGHMVTCTKCGKRMSECPICRQYVVRAVHVFKS.

The segment at 56 to 107 (EGPNIVCKACGLSFSVFRKKHVCCDCKKDFCSLCSVSQENLRRCSTCHLLQE) adopts an FYVE-type zinc-finger fold. An SAP 1 domain is found at 115–134 (LMRLKVKDLRQYLLLRNVPT). Position 169 is a phosphoserine (serine 169). The segment at 216–261 (LASANTDDEDGEEDDDDDDDDDDEDDDEQEENLEEQNPGLSKKKAR) is disordered. Positions 221–249 (TDDEDGEEDDDDDDDDDDEDDDEQEENLE) are enriched in acidic residues. A phosphoserine mark is found at serine 263 and serine 265. The SAP 2 domain occupies 273–287 (VEGMSVRQLKEILAR). The RING-type zinc-finger motif lies at 334–369 (CRICMDAVIDCVLLECGHMVTCTKCGKRMSECPICR).

As to quaternary structure, interacts with CASP8 and CASP10. Interacts with p53/TP53; involved in p53/TP53 ubiquitination. Interacts (via RING-type zinc finger) with MDM2; the interaction stabilizes MDM2. Interacts (via RING-type zinc finger) with PPARGC1A. Interacts with NOD1. Post-translationally, proteolytically cleaved by caspases upon induction of apoptosis by TNF. In terms of processing, autoubiquitinated (in vitro). As to expression, ubiquitous. Detected in brain, cerebellum, midbrain, hippocampus, striatum, heart, lung, kidney, muscle, spleen and testis.

The protein localises to the cell membrane. It is found in the endomembrane system. Its subcellular location is the nucleus. The protein resides in the nucleus speckle. It localises to the cytoplasm. The protein localises to the cytosol. The catalysed reaction is S-ubiquitinyl-[E2 ubiquitin-conjugating enzyme]-L-cysteine + [acceptor protein]-L-lysine = [E2 ubiquitin-conjugating enzyme]-L-cysteine + N(6)-ubiquitinyl-[acceptor protein]-L-lysine.. It functions in the pathway protein modification; protein ubiquitination. Functionally, E3 ubiquitin-protein ligase that regulates several biological processes through the ubiquitin-mediated proteasomal degradation of various target proteins. Ubiquitinates the caspases CASP8 and CASP10, promoting their proteasomal degradation, to negatively regulate cell death downstream of death domain receptors in the extrinsic pathway of apoptosis. May mediate 'Lys-48'-linked polyubiquitination of RIPK1 and its subsequent proteasomal degradation thereby indirectly regulating the tumor necrosis factor-mediated signaling pathway. Negatively regulates p53/TP53 through its direct ubiquitination and targeting to proteasomal degradation. Indirectly, may also negatively regulate p53/TP53 through ubiquitination and degradation of SFN. Mediates PPARGC1A proteasomal degradation probably through ubiquitination thereby indirectly regulating the metabolism of brown fat cells. Possibly involved in innate immunity, through 'Lys-48'-linked polyubiquitination of NOD1 and its subsequent proteasomal degradation. In Rattus norvegicus (Rat), this protein is E3 ubiquitin-protein ligase RNF34.